The sequence spans 611 residues: MAU2 chromatid cohesion factor homolog (611 aa).

TPR repeat units lie at residues 11–46, 91–124, 131–164, 371–404, and 490–523; these read YAGL…NPPP, FEAS…TSGE, FRLF…AEQC, PILH…ADNP, and ACSL…SGKI. Positions 581–611 are disordered; sequence WTGAVSPTKSSTIPPQQSFQTWSQPGPSRLS. Residues 585–611 show a composition bias toward polar residues; it reads VSPTKSSTIPPQQSFQTWSQPGPSRLS.

Belongs to the SCC4/mau-2 family. Component of the cohesin loading complex.

It localises to the nucleus. It is found in the nucleoplasm. In terms of biological role, required for association of the cohesin complex with chromatin during interphase. Plays a role in sister chromatid cohesion and normal progression through prometaphase. This chain is MAU2 chromatid cohesion factor homolog, found in Nematostella vectensis (Starlet sea anemone).